Here is a 901-residue protein sequence, read N- to C-terminus: HTH-type transcriptional regulator MalT (901 aa).

Position 39 to 46 (39 to 46 (SPAGYGKT)) interacts with ATP. The HTH luxR-type domain occupies 829-894 (ELIRTSPLTQ…DAVQHAQQLL (66 aa)). Residues 853–872 (NEQIAGELAVAATTIKTHIR) constitute a DNA-binding region (H-T-H motif).

Belongs to the MalT family. As to quaternary structure, monomer in solution. Oligomerizes to an active state in the presence of the positive effectors ATP and maltotriose.

Activated by ATP and maltotriose, which are both required for DNA binding. Positively regulates the transcription of the maltose regulon whose gene products are responsible for uptake and catabolism of malto-oligosaccharides. Specifically binds to the promoter region of its target genes, recognizing a short DNA motif called the MalT box. In Salmonella agona (strain SL483), this protein is HTH-type transcriptional regulator MalT.